The chain runs to 595 residues: P2X purinoceptor 7 (595 aa).

At 1-22 (MPACCSWNDVFQYETNKVTRIQ) the chain is on the cytoplasmic side. Cys-4 is lipidated: S-palmitoyl cysteine. A helical transmembrane segment spans residues 23-46 (SVNYGTIKWILHMTVFSYVSFALM). The Extracellular portion of the chain corresponds to 47–328 (SDKLYQRKEP…ILVFGTGGKF (282 aa)). Residue Asn-74 is glycosylated (N-linked (GlcNAc...) asparagine). 3 disulfides stabilise this stretch: Cys-119–Cys-168, Cys-129–Cys-152, and Cys-135–Cys-162. Arg-125 bears the ADP-ribosylarginine mark. The N-linked (GlcNAc...) asparagine glycan is linked to Asn-187. Residue Thr-189 participates in ATP binding. 2 N-linked (GlcNAc...) asparagine glycosylation sites follow: Asn-202 and Asn-213. Residues Cys-216 and Cys-226 are joined by a disulfide bond. An N-linked (GlcNAc...) asparagine glycan is attached at Asn-241. The cysteines at positions 260 and 269 are disulfide-linked. Asn-284 carries N-linked (GlcNAc...) asparagine glycosylation. ATP is bound by residues Arg-294 and Lys-311. Residues 329–353 (DIIQLVVYIGSTLSYFGLATVCIDL) traverse the membrane as a helical segment. A Na(+)-binding site is contributed by Ser-342. Over 354-595 (IINTYASTCC…GQYSGFKYPY (242 aa)) the chain is Cytoplasmic. Positions 360-377 (STCCRSRVYPSCKCCEPC) are C-cys anchor. Residues Cys-362, Cys-363, Cys-374, and Cys-377 are each lipidated (S-palmitoyl cysteine). A cytoplasmic ballast region spans residues 395–595 (KPTLKYVSFV…GQYSGFKYPY (201 aa)). Cys-479, Cys-499, and Cys-506 together coordinate Zn(2+). Residues Arg-546, His-547, Tyr-550, and Ala-567 each coordinate GTP. Position 572 (Cys-572) interacts with Zn(2+). Residues Lys-583, Ser-589, and Gly-590 each contribute to the GTP site.

It belongs to the P2X receptor family. Homotrimer. Interacts with LAMA3, ITGB2, ACTB, ACTN4, SVIL, MPP3, HSPA1, HSPCB, HSPA8, PIK230 and PTPRB. Interacts (via C-terminus) with EMP2. Phosphorylation results in its inactivation. In terms of processing, ADP-ribosylation at Arg-125 is necessary and sufficient to activate P2RX7 and gate the channel. Post-translationally, palmitoylation of several cysteines in the C-terminal cytoplasmic tail is required for efficient localization to cell surface. Palmitoylation prevents channel desensitization by physically anchoring the palmitoylated groups to the membrane.

The protein resides in the cell membrane. The enzyme catalyses Ca(2+)(in) = Ca(2+)(out). The catalysed reaction is K(+)(in) = K(+)(out). It catalyses the reaction Na(+)(in) = Na(+)(out). Activated by high extracellular ATP levels (0.1-2.5 mM). The synthetic analog 2'(3')-O-(4-benzoylbenzoyl)ATP (BzATP) acts as a potent agonist. Does not undergo desensitization, instead, undergoes a facilitation process where currents progressively increase with repetitive or prolonged agonist application. Palmitoylation prevents channel desensitization. The permeability of the P2RX7 channel is modulated by the amount of cholesterol in the plasma membrane. ATP-gated nonselective transmembrane cation channel that requires high millimolar concentrations of ATP for activation. Upon ATP binding, it rapidly opens to allow the influx of small cations Na(+) and Ca(2+), and the K(+) efflux. Also has the ability to form a large pore in the cell membrane, allowing the passage of large cationic molecules. In microglia, may mediate the transmembrane transport of exogenous NADPH. In immune cells, P2RX7 acts as a molecular sensor in pathological inflammatory states by detecting and responding to high local concentrations of extracellar ATP. In microglial cells, P2RX7 activation leads to the release of pro-inflammatory cytokines, such as IL-1beta and IL-18, through the activation of the NLRP3 inflammasome and caspase-1. Cooperates with KCNK6 to activate NLRP3 inflammasome. Activates death pathways leading to apoptosis and autophagy. Activates death pathways leading to pyroptosis. Its function is as follows. Has a higher affinity for ATP, slower deactivation and an increased propensity to form large cation-permeable pores. The chain is P2X purinoceptor 7 (P2rx7) from Rattus norvegicus (Rat).